Here is a 209-residue protein sequence, read N- to C-terminus: Uracil phosphoribosyltransferase (209 aa).

5-phospho-alpha-D-ribose 1-diphosphate is bound by residues Arg79, Arg104, and 131–139; that span reads DPMLATGNS. Uracil contacts are provided by residues Ile194 and 199–201; that span reads GDA. Residue Asp200 participates in 5-phospho-alpha-D-ribose 1-diphosphate binding.

It belongs to the UPRTase family. The cofactor is Mg(2+).

The catalysed reaction is UMP + diphosphate = 5-phospho-alpha-D-ribose 1-diphosphate + uracil. The protein operates within pyrimidine metabolism; UMP biosynthesis via salvage pathway; UMP from uracil: step 1/1. With respect to regulation, allosterically activated by GTP. Catalyzes the conversion of uracil and 5-phospho-alpha-D-ribose 1-diphosphate (PRPP) to UMP and diphosphate. This Rhizobium rhizogenes (strain K84 / ATCC BAA-868) (Agrobacterium radiobacter) protein is Uracil phosphoribosyltransferase.